We begin with the raw amino-acid sequence, 494 residues long: Cytochrome P450 2C44 (494 aa).

The N-terminal stretch at 1–25 (MELLGLPTLALLVLVMSLSLLSVWT) is a signal peptide. Residue Ser-131 is modified to Phosphoserine. 2 positions are modified to N6-acetyllysine: Lys-253 and Lys-379. Cys-439 contacts heme.

It belongs to the cytochrome P450 family. Heme is required as a cofactor. In terms of tissue distribution, highly expressed in liver, particularly in hepatocytes and bile duct epithelial cells (at protein level). Expressed in nephron segments. Prominent expression is detected in proximal tubules at the corticomedullary junction (at protein level). Also expressed in renal cortical collecting duct. Lower expression levels are detected in adrenal glands.

The protein resides in the endoplasmic reticulum membrane. It is found in the microsome membrane. It carries out the reaction (5Z,8Z,11Z,14Z)-eicosatetraenoate + reduced [NADPH--hemoprotein reductase] + O2 = (8R,9S)-epoxy-(5Z,11Z,14Z)-eicosatrienoate + oxidized [NADPH--hemoprotein reductase] + H2O + H(+). It catalyses the reaction (5Z,8Z,11Z,14Z)-eicosatetraenoate + reduced [NADPH--hemoprotein reductase] + O2 = (11R,12S)-epoxy-(5Z,8Z,14Z)-eicosatrienoate + oxidized [NADPH--hemoprotein reductase] + H2O + H(+). The catalysed reaction is (5Z,8Z,11Z,14Z)-eicosatetraenoate + reduced [NADPH--hemoprotein reductase] + O2 = 14,15-epoxy-(5Z,8Z,11Z)-eicosatrienoate + oxidized [NADPH--hemoprotein reductase] + H2O + H(+). The enzyme catalyses (5Z,8Z,11Z,14Z,17Z)-eicosapentaenoate + reduced [NADPH--hemoprotein reductase] + O2 = 8,9-epoxy-(5Z,11Z,14Z,17Z)-eicosatetraenoate + oxidized [NADPH--hemoprotein reductase] + H2O + H(+). It carries out the reaction (5Z,8Z,11Z,14Z,17Z)-eicosapentaenoate + reduced [NADPH--hemoprotein reductase] + O2 = 11,12-epoxy-(5Z,8Z,14Z,17Z)-eicosatetraenoate + oxidized [NADPH--hemoprotein reductase] + H2O + H(+). It catalyses the reaction (5Z,8Z,11Z,14Z,17Z)-eicosapentaenoate + reduced [NADPH--hemoprotein reductase] + O2 = 14,15-epoxy-(5Z,8Z,11Z,17Z)-eicosatetraenoate + oxidized [NADPH--hemoprotein reductase] + H2O + H(+). The catalysed reaction is (5Z,8Z,11Z,14Z,17Z)-eicosapentaenoate + reduced [NADPH--hemoprotein reductase] + O2 = (17R,18S)-epoxy-(5Z,8Z,11Z,14Z)-eicosatetraenoate + oxidized [NADPH--hemoprotein reductase] + H2O + H(+). The enzyme catalyses (5Z,8Z,11Z,14Z,17Z)-eicosapentaenoate + reduced [NADPH--hemoprotein reductase] + O2 = (17S,18R)-epoxy-(5Z,8Z,11Z,14Z)-eicosatetraenoate + oxidized [NADPH--hemoprotein reductase] + H2O + H(+). It carries out the reaction 20-hydroxy-(5Z,8Z,11Z,14Z)-eicosatetraenoate + reduced [NADPH--hemoprotein reductase] + O2 = 20-hydroxy-8,9-epoxy-(5Z,11Z,14Z)-eicosatrienoate + oxidized [NADPH--hemoprotein reductase] + H2O + H(+). It functions in the pathway lipid metabolism; arachidonate metabolism. Its function is as follows. A cytochrome P450 monooxygenase involved in polyunsaturated fatty acids (PUFAs) metabolism and signaling. Catalyzes preferentially the epoxidation of double bonds of PUFAs. Converts arachidonic acid (ARA, C20:4(n-6)) primarily to stereospecific products 8R,9S-epoxyeicosatrienoate (EET) and 11R,12S-EET. Plays a major role in the formation of EETs and hydroxy-EETs (HEETs) in kidney. Via EETs may inhibit the epithelial sodium channels (ENaCs) in nephron segments, preventing excessive sodium absorption during high dietary salt intake. Participates in the formation of anti-inflammatory hydroxyepoxyeicosatrienoic acids (HEETs) by converting 20-hydroxyeicosatetraenoic acid (20-HETE) to 20,8,9-HEET, an activator of PPARA. Metabolizes eicosapentaenoic acid (EPA, C20:5(n-3)) to epoxyeicosatetraenoic acid (EETeTr) regioisomers, 8,9-, 11,12-, 14,15-, and 17,18- EETeTr, preferentially producing 17R,18S enantiomer. Mechanistically, uses molecular oxygen inserting one oxygen atom into a substrate, and reducing the second into a water molecule, with two electrons provided by NADPH via cytochrome P450 reductase (CPR; NADPH-ferrihemoprotein reductase). In Mus musculus (Mouse), this protein is Cytochrome P450 2C44.